We begin with the raw amino-acid sequence, 180 residues long: MLVVGRIGKPHGIRGEVTVEVRTDEPETRFAPGSVLRTEPGANVPASPGAYRVPSELTVETARWHQGRLLLVAFEGVLDRNVAEALRGTFVGVDRADVTAPTDPEEFHDHQLVGLAVVTSAGERLGEIVRIDHAPAADLLVLRRPGDRDVLIPFVRAIVPEVDLAGGRVVVDPPGGLLDL.

The PRC barrel domain occupies 104–177 (PEEFHDHQLV…RVVVDPPGGL (74 aa)).

The protein belongs to the RimM family. As to quaternary structure, binds ribosomal protein uS19.

It is found in the cytoplasm. Functionally, an accessory protein needed during the final step in the assembly of 30S ribosomal subunit, possibly for assembly of the head region. Essential for efficient processing of 16S rRNA. May be needed both before and after RbfA during the maturation of 16S rRNA. It has affinity for free ribosomal 30S subunits but not for 70S ribosomes. The protein is Ribosome maturation factor RimM of Salinispora arenicola (strain CNS-205).